The chain runs to 78 residues: Exodeoxyribonuclease 7 small subunit (78 aa).

This sequence belongs to the XseB family. In terms of assembly, heterooligomer composed of large and small subunits.

It localises to the cytoplasm. It catalyses the reaction Exonucleolytic cleavage in either 5'- to 3'- or 3'- to 5'-direction to yield nucleoside 5'-phosphates.. Its function is as follows. Bidirectionally degrades single-stranded DNA into large acid-insoluble oligonucleotides, which are then degraded further into small acid-soluble oligonucleotides. This chain is Exodeoxyribonuclease 7 small subunit, found in Actinobacillus succinogenes (strain ATCC 55618 / DSM 22257 / CCUG 43843 / 130Z).